Here is a 1043-residue protein sequence, read N- to C-terminus: Ack-related non-receptor tyrosine kinase (1043 aa).

The region spanning 113–379 (ITLCKELGQG…SDIVAKFPER (267 aa)) is the Protein kinase domain. ATP-binding positions include 119–127 (LGQGEFGSV) and lysine 146. The Proton acceptor role is filled by aspartate 241. The SH3 domain maps to 379–444 (RRAQSVRAVV…RPTDTVAHLG (66 aa)). The segment at 443–481 (LGSEPPCSNGTIENGFSEKEKGGKKNKKAEKESERERKK) is disordered. Residues 458–481 (FSEKEKGGKKNKKAEKESERERKK) show a composition bias toward basic and acidic residues. In terms of domain architecture, CRIB spans 484-498 (ISEPVGDVRHTCHVG). Disordered regions lie at residues 514-644 (MCPT…SAAN), 790-842 (KINE…GWSS), 859-898 (KQAS…LSVR), and 932-993 (LIDG…RQFP). The span at 516-543 (PTSSSPSTSRGSQASPAPSHTSSSTTSS) shows a compositional bias: low complexity. Over residues 610 to 624 (GNQHSVQVHDQFSSL) the composition is skewed to polar residues. Residues 630-644 (SLTPTAPPLTASAAN) are compositionally biased toward low complexity. A coiled-coil region spans residues 785 to 812 (EQEVRKINEKSAREHRKTEDLLREERQK). A compositionally biased stretch (basic and acidic residues) spans 790–818 (KINEKSAREHRKTEDLLREERQKEQKPGE). Over residues 825–842 (PAESLYSTRTPQQEGWSS) the composition is skewed to polar residues. Residues 870 to 884 (PTSSRLSTLDRSSIS) show a composition bias toward low complexity.

It belongs to the protein kinase superfamily. Tyr protein kinase family. Requires Mg(2+) as cofactor.

It catalyses the reaction L-tyrosyl-[protein] + ATP = O-phospho-L-tyrosyl-[protein] + ADP + H(+). It carries out the reaction L-seryl-[protein] + ATP = O-phospho-L-seryl-[protein] + ADP + H(+). The catalysed reaction is L-threonyl-[protein] + ATP = O-phospho-L-threonyl-[protein] + ADP + H(+). Its function is as follows. Probable tyrosine protein kinase which plays a role in vulva development, probably by acting as a negative regulator of the let-23/EGFR and let-60/ras pathway. Involved in the negative regulation of germline development. In Caenorhabditis elegans, this protein is Ack-related non-receptor tyrosine kinase.